The sequence spans 1015 residues: DNA polymerase catalytic subunit (1015 aa).

It belongs to the DNA polymerase type-B family. As to quaternary structure, forms a complex with the ssDNA-binding protein BALF2, the DNA polymerase processivity factor BMRF1, and the alkaline exonuclease BGLF5. Interacts with the putative helicase-primase complex composed of BBLF4, BSLF1 and BBLF2/3 proteins; these interactions may coordinate leading and lagging strand DNA synthesis at the replication fork.

It is found in the host nucleus. It carries out the reaction DNA(n) + a 2'-deoxyribonucleoside 5'-triphosphate = DNA(n+1) + diphosphate. Functionally, replicates viral genomic DNA in the late phase of lytic infection, producing long concatemeric DNA. The replication complex is composed of six viral proteins: the DNA polymerase, processivity factor, primase, primase-associated factor, helicase, and ssDNA-binding protein. The chain is DNA polymerase catalytic subunit from Epstein-Barr virus (strain B95-8) (HHV-4).